The chain runs to 395 residues: Acetate kinase (395 aa).

Mg(2+) is bound at residue Asn7. Lys14 serves as a coordination point for ATP. Residue Arg90 coordinates substrate. The active-site Proton donor/acceptor is Asp147. Residues 207–211 (HLGNG), 282–284 (DFR), and 330–334 (GLGEN) contribute to the ATP site. Mg(2+) is bound at residue Glu383.

Belongs to the acetokinase family. As to quaternary structure, homodimer. The cofactor is Mg(2+). Mn(2+) serves as cofactor.

The protein resides in the cytoplasm. It catalyses the reaction acetate + ATP = acetyl phosphate + ADP. Its pathway is metabolic intermediate biosynthesis; acetyl-CoA biosynthesis; acetyl-CoA from acetate: step 1/2. Its function is as follows. Catalyzes the formation of acetyl phosphate from acetate and ATP. Can also catalyze the reverse reaction. The polypeptide is Acetate kinase (Lachnoclostridium phytofermentans (strain ATCC 700394 / DSM 18823 / ISDg) (Clostridium phytofermentans)).